Here is a 338-residue protein sequence, read N- to C-terminus: Protein REG2 (338 aa).

The segment at 1-21 (MTLSNCDSLDNLFQDPPEEEE) is disordered.

In terms of biological role, regulatory subunit, binds to type-1 protein phosphatase. Functions with HEX2/REG1 and SNF1 protein kinase to regulate growth. Might regulate SNF1 directly or indirectly. This is Protein REG2 (REG2) from Saccharomyces cerevisiae (strain ATCC 204508 / S288c) (Baker's yeast).